The primary structure comprises 331 residues: CRISPR-associated endonuclease Cas1 (331 aa).

Positions 158, 223, and 238 each coordinate Mn(2+).

The protein belongs to the CRISPR-associated endonuclease Cas1 family. Homodimer, forms a heterotetramer with a Cas2 homodimer. It depends on Mg(2+) as a cofactor. Mn(2+) is required as a cofactor.

CRISPR (clustered regularly interspaced short palindromic repeat), is an adaptive immune system that provides protection against mobile genetic elements (viruses, transposable elements and conjugative plasmids). CRISPR clusters contain spacers, sequences complementary to antecedent mobile elements, and target invading nucleic acids. CRISPR clusters are transcribed and processed into CRISPR RNA (crRNA). Acts as a dsDNA endonuclease. Involved in the integration of spacer DNA into the CRISPR cassette. Plasmid targeted by CRISPR locus P1 transform wild-type cells very poorly. In Haloferax volcanii (strain ATCC 29605 / DSM 3757 / JCM 8879 / NBRC 14742 / NCIMB 2012 / VKM B-1768 / DS2) (Halobacterium volcanii), this protein is CRISPR-associated endonuclease Cas1.